Here is a 356-residue protein sequence, read N- to C-terminus: Histidinol-phosphate aminotransferase (356 aa).

Lys214 is subject to N6-(pyridoxal phosphate)lysine.

Belongs to the class-II pyridoxal-phosphate-dependent aminotransferase family. Histidinol-phosphate aminotransferase subfamily. As to quaternary structure, homodimer. The cofactor is pyridoxal 5'-phosphate.

The catalysed reaction is L-histidinol phosphate + 2-oxoglutarate = 3-(imidazol-4-yl)-2-oxopropyl phosphate + L-glutamate. It functions in the pathway amino-acid biosynthesis; L-histidine biosynthesis; L-histidine from 5-phospho-alpha-D-ribose 1-diphosphate: step 7/9. The polypeptide is Histidinol-phosphate aminotransferase (Shigella flexneri serotype 5b (strain 8401)).